A 170-amino-acid polypeptide reads, in one-letter code: Ribosome maturation factor RimM (170 aa).

A PRC barrel domain is found at 93–165 (PDEFHDHELI…RVVIDPPPGL (73 aa)).

It belongs to the RimM family. In terms of assembly, binds ribosomal protein uS19.

It localises to the cytoplasm. An accessory protein needed during the final step in the assembly of 30S ribosomal subunit, possibly for assembly of the head region. Essential for efficient processing of 16S rRNA. May be needed both before and after RbfA during the maturation of 16S rRNA. It has affinity for free ribosomal 30S subunits but not for 70S ribosomes. The protein is Ribosome maturation factor RimM of Thermobifida fusca (strain YX).